A 173-amino-acid polypeptide reads, in one-letter code: Avenin-like a5 (173 aa).

The first 19 residues, 1–19 (MKTMLILALIALAATSVVA), serve as a signal peptide directing secretion.

Belongs to the prolamin family. In terms of processing, contains 7 disulfide bonds.

Seed storage protein. Not integrated in the gluten polymer through disulfide bonds, unless incorporated by reduction and reoxidation during dough making. Increases dough strength and bread volume, but decreases dough stability when added into a base wheat flour. The sequence is that of Avenin-like a5 from Triticum aestivum (Wheat).